A 169-amino-acid polypeptide reads, in one-letter code: Endoribonuclease YbeY (169 aa).

Residues histidine 130, histidine 134, and histidine 140 each contribute to the Zn(2+) site.

The protein belongs to the endoribonuclease YbeY family. The cofactor is Zn(2+).

The protein resides in the cytoplasm. Single strand-specific metallo-endoribonuclease involved in late-stage 70S ribosome quality control and in maturation of the 3' terminus of the 16S rRNA. The polypeptide is Endoribonuclease YbeY (Neisseria meningitidis serogroup B (strain ATCC BAA-335 / MC58)).